The following is a 45-amino-acid chain: DVCDSLVDGRCIHNGCFCERDAPNGNCCDTDGCTARWWCPGTKWD.

Intrachain disulfides connect Cys3–Cys16, Cys11–Cys28, Cys18–Cys33, and Cys27–Cys39. Pro23 carries the 4-hydroxyproline modification. A 6'-bromotryptophan mark is found at Trp37 and Trp38. Pro40 carries the 4-hydroxyproline modification. Trp44 carries the 6'-bromotryptophan modification.

In terms of tissue distribution, expressed by the venom duct.

Its subcellular location is the secreted. In terms of biological role, mu-conotoxins block voltage-gated sodium channels. This toxin reversibly blocks voltage-gated sodium channel in cephalopods, with no alteration in the voltage dependence of sodium conductance or on the kinetics of inactivation. The chain is Mu-conotoxin-like Cal 12.1.2a from Californiconus californicus (California cone).